The sequence spans 222 residues: Protein ORM1 (222 aa).

The tract at residues 1 to 57 (MTELDYQGTAEAASTSYSRNQTDLKPFPSAGSASSSIKTTEPVKDHRRRRSSSIISH) is disordered. At 1–85 (MTELDYQGTA…NATWVDQRGA (85 aa)) the chain is on the cytoplasmic side. Residues 12–23 (AASTSYSRNQTD) are compositionally biased toward polar residues. Ser-29, Ser-32, and Ser-56 each carry phosphoserine. Residues 86–106 (WIIHVVIIILLKLFYNLFPGV) traverse the membrane as a helical segment. At 107–109 (TTE) the chain is on the extracellular side. Residues 110 to 130 (WSWTLTNMTYVIGSYVMFHLI) traverse the membrane as a helical segment. Residues 131–162 (KGTPFDFNGGAYDNLTMWEQIDDETLYTPSRK) are Cytoplasmic-facing. A helical transmembrane segment spans residues 163–183 (FLISVPIALFLVSTHYAHYDL). Position 184 (Lys-184) is a topological domain, extracellular. A helical transmembrane segment spans residues 185 to 205 (LFSWNCFLTTFGAVVPKLPVT). The Cytoplasmic segment spans residues 206–222 (HRLRISIPGITGRAQIS).

It belongs to the ORM family. As to quaternary structure, component of the SPOTS complex, at least composed of LCB1/2 (LCB1 and/or LCB2), ORM1/2 (ORM1 and/or ORM2), SAC1 and TSC3. Phosphorylated in case of disruption of sphingolipid synthesis. Phosphorylation regulates inhibitory activity of serine palmitoyltransferases (LCB1 and LCB2).

It is found in the endoplasmic reticulum membrane. Its function is as follows. Component of the SPOTS complex that acts as a negative regulator of sphingolipid synthesis. Acts by inhibiting serine palmitoyltransferases (LCB1 and LCB2) activity. Along with ORM2, plays a role in the phosphorylation of LAC1 and YPK1, the distribution of actin patches between mother and daughter cells, and in endocytosis. Disruption or inhibition of sphingolipid synthesis leads to the activation and phosphorylation of YPK1 through the TORC2 and PKH1 pathways, which in turn phosphorylates ORM1 and LAG1 to activate sphingolipid synthesis. This chain is Protein ORM1 (ORM1), found in Saccharomyces cerevisiae (strain ATCC 204508 / S288c) (Baker's yeast).